The primary structure comprises 61 residues: Small ribosomal subunit protein uS14 (61 aa).

Positions 24, 27, 40, and 43 each coordinate Zn(2+).

This sequence belongs to the universal ribosomal protein uS14 family. Zinc-binding uS14 subfamily. Part of the 30S ribosomal subunit. Contacts proteins S3 and S10. Requires Zn(2+) as cofactor.

Binds 16S rRNA, required for the assembly of 30S particles and may also be responsible for determining the conformation of the 16S rRNA at the A site. The polypeptide is Small ribosomal subunit protein uS14 (Mycobacterium sp. (strain JLS)).